The sequence spans 111 residues: MTTIFERIIEGAVECDKVFEDENFIVIKDKFPQAPVHLLIIPKKHIEKLQDIQGDDFLLLAEAGKIIQLMARNFGIENGYRVVVNNGLEGGQSVFHLHIHLLGGGLLGSIA.

The HIT domain occupies 4–111 (IFERIIEGAV…LGGGLLGSIA (108 aa)). The Histidine triad motif motif lies at 96–100 (HLHIH).

This is an uncharacterized protein from Chlamydia trachomatis serovar D (strain ATCC VR-885 / DSM 19411 / UW-3/Cx).